The sequence spans 492 residues: Putative BTB/POZ domain and WD-repeat protein R786 (492 aa).

One can recognise a BTB domain in the interval 16–86; that stretch reads TDVEIVLIDE…FYGQIVDSTN (71 aa). 2 WD repeats span residues 241-281 and 286-325; these read QSSC…IKIK and LINR…SKGI.

This sequence belongs to the mimivirus BTB/WD family.

The polypeptide is Putative BTB/POZ domain and WD-repeat protein R786 (Acanthamoeba polyphaga (Amoeba)).